A 274-amino-acid chain; its full sequence is Momilactone A synthase (274 aa).

This sequence belongs to the short-chain dehydrogenases/reductases (SDR) family.

It carries out the reaction 3beta-hydroxy-9beta-pimara-7,15-dien-19,6beta-olide + NAD(+) = momilactone A + NADH + H(+). The catalysed reaction is 3beta-hydroxy-9beta-pimara-7,15-dien-19,6beta-olide + NADP(+) = momilactone A + NADPH + H(+). In terms of biological role, involved in momilactone phytoalexins biosynthesis. Catalyzes the last step of momilactone A biosynthesis. In Oryza sativa subsp. japonica (Rice), this protein is Momilactone A synthase.